The following is a 137-amino-acid chain: Large ribosomal subunit protein uL16 (137 aa).

The protein belongs to the universal ribosomal protein uL16 family. In terms of assembly, part of the 50S ribosomal subunit.

In terms of biological role, binds 23S rRNA and is also seen to make contacts with the A and possibly P site tRNAs. In Cereibacter sphaeroides (strain ATCC 17029 / ATH 2.4.9) (Rhodobacter sphaeroides), this protein is Large ribosomal subunit protein uL16.